Here is a 637-residue protein sequence, read N- to C-terminus: Biosynthetic arginine decarboxylase (637 aa).

N6-(pyridoxal phosphate)lysine is present on lysine 107. Position 289–299 (289–299 (LDVGGGLGVDY)) interacts with substrate.

This sequence belongs to the Orn/Lys/Arg decarboxylase class-II family. SpeA subfamily. Mg(2+) serves as cofactor. Requires pyridoxal 5'-phosphate as cofactor.

It carries out the reaction L-arginine + H(+) = agmatine + CO2. In terms of biological role, catalyzes the biosynthesis of agmatine from arginine. The protein is Biosynthetic arginine decarboxylase of Thermosynechococcus vestitus (strain NIES-2133 / IAM M-273 / BP-1).